The chain runs to 841 residues: Replication origin-binding protein (841 aa).

Residues 45–210 (PLYPRTRNVL…AIMRGEENIH (166 aa)) enclose the Helicase ATP-binding domain. Position 58–65 (58–65 (APMGSGKT)) interacts with ATP.

It belongs to the herpesviridae OriBP family. In terms of assembly, homodimer. Interacts with the major DNA-binding protein. Interacts with the DNA helicase/primase complex-associated protein and the polymerase accessory protein.

Its subcellular location is the host nucleus. In terms of biological role, functions as a docking protein to recruit essential components of the viral replication machinery to viral DNA origins. In the presence of the major DNA-binding protein, opens dsDNA leading to a conformational change in the origin that facilitates DNA unwinding and subsequent replication. This Gallid herpesvirus 2 (strain Chicken/Md5/ATCC VR-987) (GaHV-2) protein is Replication origin-binding protein (MDV021).